A 171-amino-acid polypeptide reads, in one-letter code: NADH-quinone oxidoreductase subunit I 1 (171 aa).

4Fe-4S ferredoxin-type domains are found at residues 41-71 (LSRD…LQAT) and 81-110 (EFFR…LTPD). Cysteine 51, cysteine 54, cysteine 57, cysteine 61, cysteine 90, cysteine 93, cysteine 96, and cysteine 100 together coordinate [4Fe-4S] cluster.

It belongs to the complex I 23 kDa subunit family. In terms of assembly, NDH-1 is composed of 14 different subunits. Subunits NuoA, H, J, K, L, M, N constitute the membrane sector of the complex. Requires [4Fe-4S] cluster as cofactor.

The protein localises to the cell inner membrane. The enzyme catalyses a quinone + NADH + 5 H(+)(in) = a quinol + NAD(+) + 4 H(+)(out). Functionally, NDH-1 shuttles electrons from NADH, via FMN and iron-sulfur (Fe-S) centers, to quinones in the respiratory chain. The immediate electron acceptor for the enzyme in this species is believed to be ubiquinone. Couples the redox reaction to proton translocation (for every two electrons transferred, four hydrogen ions are translocated across the cytoplasmic membrane), and thus conserves the redox energy in a proton gradient. The protein is NADH-quinone oxidoreductase subunit I 1 of Nitrosospira multiformis (strain ATCC 25196 / NCIMB 11849 / C 71).